A 142-amino-acid polypeptide reads, in one-letter code: Ribosome maturation factor RimP (142 aa).

It belongs to the RimP family.

Its subcellular location is the cytoplasm. Its function is as follows. Required for maturation of 30S ribosomal subunits. The sequence is that of Ribosome maturation factor RimP from Nitratiruptor sp. (strain SB155-2).